A 285-amino-acid polypeptide reads, in one-letter code: Putative hydrolase DDAH2 (285 aa).

Histidine 171 serves as the catalytic Proton donor. Residue cysteine 276 is the Nucleophile of the active site.

This sequence belongs to the DDAH family. Phosphorylated by TBK1. Phosphorylation inhibits the translocation into the mitochondrion upon Sendai viral infection.

The protein localises to the cytoplasm. It is found in the mitochondrion. Putative hydrolase with unknown substrate. Does not hydrolyze N(G),N(G)-dimethyl-L-arginine (ADMA) which acts as an inhibitor of NOS. In endothelial cells, induces expression of vascular endothelial growth factor (VEGF) via phosphorylation of the transcription factor SP1 by PKA in a process that is independent of NO and NO synthase. Similarly, enhances pancreatic insulin secretion through SP1-mediated transcriptional up-regulation of secretagogin/SCGN, an insulin vesicle docking protein. Upon viral infection, relocates to mitochondria where it promotes mitochondrial fission through activation of DNM1L leading to the inhibition of innate response activation mediated by MAVS. In Bos taurus (Bovine), this protein is Putative hydrolase DDAH2 (DDAH2).